The following is an 858-amino-acid chain: Bifunctional uridylyltransferase/uridylyl-removing enzyme (858 aa).

Positions 1 to 318 are uridylyltransferase; sequence MNPTDLHPIK…FPRPESDARA (318 aa). Residues 319 to 674 form a uridylyl-removing region; it reads IDEEFRSLHG…VRPTEEGSGL (356 aa). Residues 437-559 form the HD domain; that stretch reads VDQHTLAVIR…VKDERHLNAL (123 aa). ACT domains are found at residues 675–756 and 789–858; these read QIMV…LADV and RLSV…LAGE.

This sequence belongs to the GlnD family. Requires Mg(2+) as cofactor.

The catalysed reaction is [protein-PII]-L-tyrosine + UTP = [protein-PII]-uridylyl-L-tyrosine + diphosphate. It catalyses the reaction [protein-PII]-uridylyl-L-tyrosine + H2O = [protein-PII]-L-tyrosine + UMP + H(+). Its activity is regulated as follows. Uridylyltransferase (UTase) activity is inhibited by glutamine, while glutamine activates uridylyl-removing (UR) activity. Modifies, by uridylylation and deuridylylation, the PII regulatory proteins (GlnB and homologs), in response to the nitrogen status of the cell that GlnD senses through the glutamine level. Under low glutamine levels, catalyzes the conversion of the PII proteins and UTP to PII-UMP and PPi, while under higher glutamine levels, GlnD hydrolyzes PII-UMP to PII and UMP (deuridylylation). Thus, controls uridylylation state and activity of the PII proteins, and plays an important role in the regulation of nitrogen assimilation and metabolism. The chain is Bifunctional uridylyltransferase/uridylyl-removing enzyme from Bordetella avium (strain 197N).